The sequence spans 647 residues: Zinc finger CCCH domain-containing protein 19 (647 aa).

C3H1-type zinc fingers lie at residues 16 to 45 (RRRS…HSDA) and 47 to 73 (RMNP…HPPL). Positions 78 to 106 (GAPTTPRTSQQSAPQVSVPAQAPVPNPAS) are disordered. The span at 86–106 (SQQSAPQVSVPAQAPVPNPAS) shows a compositional bias: low complexity. A C3H1-type 3 zinc finger spans residues 109-136 (AKQGVPCYYFQKGMCVKGDRCAFLHLPQ). 5 disordered regions span residues 155–280 (VPHP…RTNG), 308–327 (LSES…DSSD), 335–452 (QRRL…DAES), 512–580 (LKRK…LSPA), and 586–605 (EAAD…ETAE). Composition is skewed to polar residues over residues 160-175 (LKNS…QQNA) and 189-203 (NGKT…NRAG). Basic and acidic residues predominate over residues 267–280 (SLREDRGAYRRTNG). Residues 347 to 359 (SDRHNVYPEDERH) are compositionally biased toward basic and acidic residues. Polar residues predominate over residues 369–379 (QASNDGVSSSR). Positions 419–433 (LRGKLHDRLKAKPNE) are enriched in basic and acidic residues. Residues 435-445 (VSGNVQSSLSK) show a composition bias toward polar residues. The span at 527 to 536 (GSKREEHSGG) shows a compositional bias: basic and acidic residues.

This chain is Zinc finger CCCH domain-containing protein 19, found in Oryza sativa subsp. japonica (Rice).